Consider the following 342-residue polypeptide: Adenylate isopentenyltransferase 6, chloroplastic (342 aa).

The N-terminal 33 residues, 1–33 (MQQLMTLLSPPLSHSSLLPTVTTKFGSPRLVTT), are a transit peptide targeting the chloroplast. 52 to 59 (GTTGTGKS) serves as a coordination point for ATP.

This sequence belongs to the IPP transferase family. Expressed in siliques, at the mRNA level.

It is found in the plastid. Its subcellular location is the chloroplast. It carries out the reaction dimethylallyl diphosphate + ADP = N(6)-(dimethylallyl)adenosine 5'-diphosphate + diphosphate. The enzyme catalyses dimethylallyl diphosphate + ATP = N(6)-(dimethylallyl)adenosine 5'-triphosphate + diphosphate. Involved in cytokinin biosynthesis. Catalyzes the transfer of an isopentenyl group from dimethylallyl diphosphate (DMAPP) to ATP and ADP. This is Adenylate isopentenyltransferase 6, chloroplastic (IPT6) from Arabidopsis thaliana (Mouse-ear cress).